Here is a 51-residue protein sequence, read N- to C-terminus: Ribosome biogenesis protein Nop10 (51 aa).

Belongs to the NOP10 family.

Functionally, involved in ribosome biogenesis; more specifically in 18S rRNA pseudouridylation and in cleavage of pre-rRNA. In Methanococcus maripaludis (strain C7 / ATCC BAA-1331), this protein is Ribosome biogenesis protein Nop10.